The sequence spans 276 residues: MLATHTRTVFYISDGTGITAETFGNAILAQFDIRPRHVRLPFIDTEDKAHQVVRQINHTAELEGKKPIVFTTLVNMSVLKIIEDGCRGMLLDMFGTFIRPLESELGVKSHHRVGRFSDISVSKEYSDRIEAINFSLDHDDGQSHRDLSGADVILIGVSRSGKTPTSLYLAMQCGLKVANYPLIPEDFERRQLPPALVPHRKKIFGLTIDPQRLSQIRNERRPGSRYADLVNCRNEVAEAEAMMRRSGIRWLSTTTKSIEEIATTILQEVRPERLQY.

156–163 (GVSRSGKT) serves as a coordination point for ADP.

This sequence belongs to the pyruvate, phosphate/water dikinase regulatory protein family. PSRP subfamily.

It catalyses the reaction [pyruvate, water dikinase] + ADP = [pyruvate, water dikinase]-phosphate + AMP + H(+). The catalysed reaction is [pyruvate, water dikinase]-phosphate + phosphate + H(+) = [pyruvate, water dikinase] + diphosphate. Bifunctional serine/threonine kinase and phosphorylase involved in the regulation of the phosphoenolpyruvate synthase (PEPS) by catalyzing its phosphorylation/dephosphorylation. This Acidovorax ebreus (strain TPSY) (Diaphorobacter sp. (strain TPSY)) protein is Putative phosphoenolpyruvate synthase regulatory protein.